The sequence spans 451 residues: Probable multidrug resistance protein NorM (451 aa).

12 helical membrane passes run 23–43, 53–73, 101–121, 132–152, 169–189, 194–214, 243–263, 277–297, 316–336, 355–375, 391–411, and 422–442; these read GPVV…TAVI, AAAY…GVML, LALL…FVLP, LVAA…AFIA, VALT…FGWG, LGLA…AALL, WPIG…TLLM, TMQT…ATGV, LVGL…ELAA, LIAA…MDGL, VPLL…GSVL, and LWFG…GRFL.

This sequence belongs to the multi antimicrobial extrusion (MATE) (TC 2.A.66.1) family.

Its subcellular location is the cell membrane. Functionally, multidrug efflux pump. This is Probable multidrug resistance protein NorM (norM) from Deinococcus radiodurans (strain ATCC 13939 / DSM 20539 / JCM 16871 / CCUG 27074 / LMG 4051 / NBRC 15346 / NCIMB 9279 / VKM B-1422 / R1).